The following is a 462-amino-acid chain: UDP-N-acetylmuramoylalanine--D-glutamate ligase (462 aa).

An ATP-binding site is contributed by 125–131; that stretch reads GSDGKTT.

The protein belongs to the MurCDEF family.

The protein resides in the cytoplasm. The enzyme catalyses UDP-N-acetyl-alpha-D-muramoyl-L-alanine + D-glutamate + ATP = UDP-N-acetyl-alpha-D-muramoyl-L-alanyl-D-glutamate + ADP + phosphate + H(+). It participates in cell wall biogenesis; peptidoglycan biosynthesis. In terms of biological role, cell wall formation. Catalyzes the addition of glutamate to the nucleotide precursor UDP-N-acetylmuramoyl-L-alanine (UMA). The sequence is that of UDP-N-acetylmuramoylalanine--D-glutamate ligase from Clostridium acetobutylicum (strain ATCC 824 / DSM 792 / JCM 1419 / IAM 19013 / LMG 5710 / NBRC 13948 / NRRL B-527 / VKM B-1787 / 2291 / W).